A 712-amino-acid polypeptide reads, in one-letter code: DNA ligase (712 aa).

NAD(+) contacts are provided by residues aspartate 53–aspartate 57, serine 103–leucine 104, and glutamate 133. Lysine 135 serves as the catalytic N6-AMP-lysine intermediate. Residues arginine 156, glutamate 196, lysine 315, and lysine 339 each contribute to the NAD(+) site. Residues cysteine 433, cysteine 436, cysteine 452, and cysteine 458 each contribute to the Zn(2+) site. The region spanning serine 622–proline 711 is the BRCT domain.

Belongs to the NAD-dependent DNA ligase family. LigA subfamily. It depends on Mg(2+) as a cofactor. Mn(2+) serves as cofactor.

The enzyme catalyses NAD(+) + (deoxyribonucleotide)n-3'-hydroxyl + 5'-phospho-(deoxyribonucleotide)m = (deoxyribonucleotide)n+m + AMP + beta-nicotinamide D-nucleotide.. DNA ligase that catalyzes the formation of phosphodiester linkages between 5'-phosphoryl and 3'-hydroxyl groups in double-stranded DNA using NAD as a coenzyme and as the energy source for the reaction. It is essential for DNA replication and repair of damaged DNA. The polypeptide is DNA ligase (Mycolicibacterium gilvum (strain PYR-GCK) (Mycobacterium gilvum (strain PYR-GCK))).